The sequence spans 728 residues: Catalase-peroxidase 1 (728 aa).

A signal peptide spans 1–22 (MDKTQSSQGKCPVMHGANSAVA). A cross-link (tryptophyl-tyrosyl-methioninium (Trp-Tyr) (with M-251)) is located at residues 97-225 (WHSAGTYRVA…LAAVMMGLIY (129 aa)). The active-site Proton acceptor is histidine 98. The tryptophyl-tyrosyl-methioninium (Tyr-Met) (with W-97) cross-link spans 225-251 (YVNPEGVDGKPDPLRTAQDVRVTFARM). Histidine 266 lines the heme b pocket.

Belongs to the peroxidase family. Peroxidase/catalase subfamily. In terms of assembly, homodimer or homotetramer. Heme b is required as a cofactor. In terms of processing, formation of the three residue Trp-Tyr-Met cross-link is important for the catalase, but not the peroxidase activity of the enzyme.

The catalysed reaction is H2O2 + AH2 = A + 2 H2O. The enzyme catalyses 2 H2O2 = O2 + 2 H2O. Functionally, bifunctional enzyme with both catalase and broad-spectrum peroxidase activity. The sequence is that of Catalase-peroxidase 1 from Shewanella sp. (strain MR-4).